The primary structure comprises 312 residues: Lipid-translocating exporter-like protein RTA1 (312 aa).

Positions 1-21 (MSPESKKITAHGSTSMPLSRT) are disordered. The span at 11 to 21 (HGSTSMPLSRT) shows a compositional bias: polar residues. 6 helical membrane passes run 29–49 (IPLT…FFLA), 61–81 (LSTM…YFIC), 103–123 (FITF…LLAG), 142–162 (AMIT…SFHV), 183–203 (FMMV…RSAY), and 223–243 (SLML…ILPI). Asparagine 258 and asparagine 304 each carry an N-linked (GlcNAc...) asparagine glycan.

The protein belongs to the lipid-translocating exporter (LTE) (TC 9.A.26.1) family.

It localises to the membrane. Its pathway is siderophore biosynthesis. In terms of biological role, lipid-translocating exporter-like protein; part of the gene cluster that mediates the biosynthesis of hydroxamate-containing siderophores that play a critical role in virulence via intracellular iron acquisition during macrophage infection. In Ajellomyces capsulatus (Darling's disease fungus), this protein is Lipid-translocating exporter-like protein RTA1.